Here is a 387-residue protein sequence, read N- to C-terminus: Queuine tRNA-ribosyltransferase (387 aa).

Asp-93 serves as the catalytic Proton acceptor. Substrate-binding positions include 93–97 (DSGGF), Asp-147, Gln-190, and Gly-217. Residues 248 to 254 (GVGTPDD) form an RNA binding region. Asp-267 acts as the Nucleophile in catalysis. Residues 272–276 (TRAGR) are RNA binding; important for wobble base 34 recognition. Zn(2+)-binding residues include Cys-305, Cys-307, Cys-310, and His-336.

It belongs to the queuine tRNA-ribosyltransferase family. As to quaternary structure, homodimer. Within each dimer, one monomer is responsible for RNA recognition and catalysis, while the other monomer binds to the replacement base PreQ1. Zn(2+) serves as cofactor.

The enzyme catalyses 7-aminomethyl-7-carbaguanine + guanosine(34) in tRNA = 7-aminomethyl-7-carbaguanosine(34) in tRNA + guanine. It participates in tRNA modification; tRNA-queuosine biosynthesis. In terms of biological role, catalyzes the base-exchange of a guanine (G) residue with the queuine precursor 7-aminomethyl-7-deazaguanine (PreQ1) at position 34 (anticodon wobble position) in tRNAs with GU(N) anticodons (tRNA-Asp, -Asn, -His and -Tyr). Catalysis occurs through a double-displacement mechanism. The nucleophile active site attacks the C1' of nucleotide 34 to detach the guanine base from the RNA, forming a covalent enzyme-RNA intermediate. The proton acceptor active site deprotonates the incoming PreQ1, allowing a nucleophilic attack on the C1' of the ribose to form the product. After dissociation, two additional enzymatic reactions on the tRNA convert PreQ1 to queuine (Q), resulting in the hypermodified nucleoside queuosine (7-(((4,5-cis-dihydroxy-2-cyclopenten-1-yl)amino)methyl)-7-deazaguanosine). This is Queuine tRNA-ribosyltransferase from Gluconacetobacter diazotrophicus (strain ATCC 49037 / DSM 5601 / CCUG 37298 / CIP 103539 / LMG 7603 / PAl5).